We begin with the raw amino-acid sequence, 364 residues long: Cobalt-precorrin-5B C(1)-methyltransferase (364 aa).

This sequence belongs to the CbiD family.

The catalysed reaction is Co-precorrin-5B + S-adenosyl-L-methionine = Co-precorrin-6A + S-adenosyl-L-homocysteine. The protein operates within cofactor biosynthesis; adenosylcobalamin biosynthesis; cob(II)yrinate a,c-diamide from sirohydrochlorin (anaerobic route): step 6/10. Catalyzes the methylation of C-1 in cobalt-precorrin-5B to form cobalt-precorrin-6A. This chain is Cobalt-precorrin-5B C(1)-methyltransferase, found in Pseudomonas putida (strain GB-1).